Reading from the N-terminus, the 321-residue chain is Quinol oxidase subunit 2 (321 aa).

Positions 1–25 are cleaved as a signal peptide; sequence MIFLFRALKPLLVLALLTVVFVLGG. C26 is lipidated: N-palmitoyl cysteine. C26 carries the S-diacylglycerol cysteine lipid modification. Helical transmembrane passes span 49–69 and 90–110; these read SIGF…IILV and TFLE…LSVP. The disordered stretch occupies residues 294-321; that stretch reads QAVSPHSKTDPFENVKKNEFKKSDDTEE. Basic and acidic residues predominate over residues 300-321; that stretch reads SKTDPFENVKKNEFKKSDDTEE.

The protein belongs to the cytochrome c oxidase subunit 2 family. As to quaternary structure, interacts with FloT.

Its subcellular location is the cell membrane. The protein resides in the membrane raft. The catalysed reaction is 2 a quinol + O2 = 2 a quinone + 2 H2O. Its function is as follows. Catalyzes quinol oxidation with the concomitant reduction of oxygen to water. Major component for energy conversion during vegetative growth. Subunit II transfers the electrons from a quinol to the binuclear center of the catalytic subunit I. The chain is Quinol oxidase subunit 2 (qoxA) from Bacillus subtilis (strain 168).